Here is a 283-residue protein sequence, read N- to C-terminus: uncharacterized protein (283 aa).

This is an uncharacterized protein from Methanocaldococcus jannaschii (strain ATCC 43067 / DSM 2661 / JAL-1 / JCM 10045 / NBRC 100440) (Methanococcus jannaschii).